The sequence spans 318 residues: Isoflavone reductase (318 aa).

NADP(+) is bound by residues 11–17 (GATGAIG), Arg-36, and Lys-44. The active-site Proton acceptor is the Lys-144. Residue Arg-148 coordinates NADP(+).

The protein belongs to the NmrA-type oxidoreductase family. Isoflavone reductase subfamily.

The catalysed reaction is (3R)-vestitone + NADP(+) = 2'-hydroxyformononetin + NADPH + 2 H(+). The protein operates within phytoalexin biosynthesis; pterocarpan phytoalexin biosynthesis. Functionally, reduces achiral isoflavones to chiral isoflavanones during the biosynthesis of chiral pterocarpan phytoalexins. The reduction product (sophrol) is a third isomer, which represents the penultimate intermediate in the synthesis of the phytoalexin (+)-pisatin, the major phytoalexin in pea. In Pisum sativum (Garden pea), this protein is Isoflavone reductase (IFR).